Here is an 870-residue protein sequence, read N- to C-terminus: MASASSSRAGVALPFEKSQLTLKVVSAKPKVHNRQPRINSYVEVAVDGLPSETKKTGKRIGSSELLWNEIIILNVTAQSHLDLKVWSCHTLRNELLGTASVNLSNVLKNNGGKMENMQLTLNLQTENKGSVVSGGELTIFLDGPTVDLGNVPNGSALTDGSQLPSRDSSGTAVAPENRHQPPSTNCFGGRSRTHRHSGASARTTPATGEQSPGARSRHRQPVKNSGHSGLANGTVNDEPTTATDPEEPSVVGVTSPPAAPLSVTPNPNTTSLPAPATPAEGEEPSTSGTQQLPAAAQAPDALPAGWEQRELPNGRVYYVDHNTKTTTWERPLPPGWEKRTDPRGRFYYVDHNTRTTTWQRPTAEYVRNYEQWQSQRNQLQGAMQHFSQRFLYQSSSASTDHDPLGPLPPGWEKRQDNGRVYYVNHNTRTTQWEDPRTQGMIQEPALPPGWEMKYTSEGVRYFVDHNTRTTTFKDPRPGFESGTKQGSPGAYDRSFRWKYHQFRFLCHSNALPSHVKISVSRQTLFEDSFQQIMNMKPYDLRRRLYIIMRGEEGLDYGGIAREWFFLLSHEVLNPMYCLFEYAGKNNYCLQINPASSINPDHLTYFRFIGRFIAMALYHGKFIDTGFTLPFYKRMLNKRPTLKDLESIDPEFYNSIVWIKENNLEECGLELYFIQDMEILGKVTTHELKEGGESIRVTEENKEEYIMLLTDWRFTRGVEEQTKAFLDGFNEVAPLEWLRYFDEKELELMLCGMQEIDMSDWQKSTIYRHYTKNSKQIQWFWQVVKEMDNEKRIRLLQFVTGTCRLPVGGFAELIGSNGPQKFCIDKVGKETWLPRSHTCFNRLDLPPYKSYEQLREKLLYAIEETEGFGQE.

A C2 domain is found at 1–117 (MASASSSRAG…KNNGGKMENM (117 aa)). The tract at residues 151–299 (VPNGSALTDG…QQLPAAAQAP (149 aa)) is disordered. Polar residues-rich tracts occupy residues 152–171 (PNGS…SSGT) and 200–210 (SARTTPATGEQ). Position 211 is a phosphoserine (Ser-211). Composition is skewed to polar residues over residues 222–243 (VKNS…TTAT) and 263–272 (VTPNPNTTSL). Residues 290–299 (QQLPAAAQAP) show a composition bias toward low complexity. WW domains lie at 300–333 (DALP…RPLP), 330–363 (RPLP…RPTA), 405–437 (GPLP…DPRT), and 444–477 (PALP…DPRP). Positions 536-870 (KPYDLRRRLY…IEETEGFGQE (335 aa)) constitute an HECT domain. Cys-838 (glycyl thioester intermediate) is an active-site residue.

Interacts with POU5F1, RBP1, EGR2 and SLC11A2. Interacts with SCNN1A, SCNN1B, SCNN1G, WBP1, WBP2 and ATN1. Interacts with ERBB4, NDFIP1 and NDFIP2. Interacts with ARRDC4. Interacts (via WW domains) with ARRDC1 (via PPxY motifs); ubiquitinates ARRDC1. Interacts (via WW domains) with ARRDC2 and ARRDC3. As to quaternary structure, (Microbial infection) Interacts with adenovirus type 2 PIII. In terms of processing, autoubiquitinated. Ubiquitinated by the SCF(FBXL15) complex, leading to its degradation by the proteasome. Detected in heart, throughout the brain, placenta, lung, liver, muscle, kidney and pancreas. Also detected in spleen and peripheral blood leukocytes.

It localises to the nucleus. It catalyses the reaction S-ubiquitinyl-[E2 ubiquitin-conjugating enzyme]-L-cysteine + [acceptor protein]-L-lysine = [E2 ubiquitin-conjugating enzyme]-L-cysteine + N(6)-ubiquitinyl-[acceptor protein]-L-lysine.. It functions in the pathway protein modification; protein ubiquitination. Its activity is regulated as follows. Activated by NDFIP1- and NDFIP2-binding. E3 ubiquitin-protein ligase which accepts ubiquitin from an E2 ubiquitin-conjugating enzyme in the form of a thioester and then directly transfers the ubiquitin to targeted substrates. Polyubiquitinates POU5F1 by 'Lys-63'-linked conjugation and promotes it to proteasomal degradation; in embryonic stem cells (ESCs) the ubiquitination is proposed to regulate POU5F1 protein level. Ubiquitinates EGR2 and promotes it to proteasomal degradation; in T-cells the ubiquitination inhibits activation-induced cell death. Ubiquitinates SLC11A2; the ubiquitination is enhanced by presence of NDFIP1 and NDFIP2. Ubiquitinates RPB1 and promotes it to proteasomal degradation. This is NEDD4-like E3 ubiquitin-protein ligase WWP2 (WWP2) from Homo sapiens (Human).